Here is a 1207-residue protein sequence, read N- to C-terminus: Plasma membrane calcium-transporting ATPase 4 (1207 aa).

Residues 1–100 are Cytoplasmic-facing; sequence MTNPTEHTLP…KTFLELVWEA (100 aa). Position 13 is a phosphoserine (serine 13). The chain crosses the membrane as a helical span at residues 101 to 121; the sequence is LQDVTLIILEIAAIISLVLSF. At 122–147 the chain is on the extracellular side; the sequence is YRPPGGENEQCGLAVTSPEDEGEAEA. A helical membrane pass occupies residues 148–168; sequence GWIEGAAILFSVIIVVLVTAF. At 169–368 the chain is on the cytoplasmic side; the sequence is NDWSKEKQFR…LAVQIGKAGL (200 aa). The segment at 294–317 is disordered; that stretch reads EEEKKKKGKKQGVPENRNKAKTQD. 2 positions are modified to phosphoserine: serine 328 and serine 334. The helical transmembrane segment at 369–389 threads the bilayer; sequence IMSAITVLILILYFVIDNFVI. Over 390 to 408 the chain is Extracellular; sequence QRRPWLAECTPIYVQYFVK. Residues 409–429 traverse the membrane as a helical segment; that stretch reads FFIIGVTVLVVAVPEGLPLAV. Residues 430-843 are Cytoplasmic-facing; that stretch reads TISLAYSVKK…RNVYDSISKF (414 aa). Aspartate 465 serves as the catalytic 4-aspartylphosphate intermediate. Aspartate 785 and aspartate 789 together coordinate Mg(2+). The helical transmembrane segment at 844–864 threads the bilayer; the sequence is LQFQLTVNVVAVIVAFTGACI. Topologically, residues 865-871 are extracellular; it reads TQDSPLK. The chain crosses the membrane as a helical span at residues 872-892; the sequence is AVQMLWVNLIMDTFASLALAT. Residues 893–918 lie on the Cytoplasmic side of the membrane; it reads EPPTDSLLKRRPYGRNKPLISRTMMK. A helical transmembrane segment spans residues 919-939; that stretch reads NILGHAVYQLTVIFFLVFAGE. Over 940-957 the chain is Extracellular; that stretch reads KFFDIDSGRRAPLHSPPS. Residues 958 to 977 traverse the membrane as a helical segment; that stretch reads QHYTIIFNTFVLMQLFNEIN. Topologically, residues 978-994 are cytoplasmic; that stretch reads SRKIHGERNVFSGIFRN. Residues 995 to 1015 form a helical membrane-spanning segment; it reads LIFCSVVLGTFISQIIIVEFG. Residues 1016-1028 lie on the Extracellular side of the membrane; sequence GKPFSCTKLTLSQ. Residues 1029 to 1049 traverse the membrane as a helical segment; sequence WFWCLFIGIGELLWGQVISTI. The Cytoplasmic segment spans residues 1050–1207; it reads PTQSLKFLKE…SPLHSLETSV (158 aa). A calmodulin-binding subdomain A region spans residues 1086-1103; that stretch reads LRRGQILWFRGLNRIQTQ. Threonine 1102 carries the post-translational modification Phosphothreonine; by PKC. Residues 1104-1113 form a calmodulin-binding subdomain B region; the sequence is IKVVKAFHSS. Positions 1159–1181 are disordered; it reads VSKPGTKTSSLDGEVTPQTNKNN. Positions 1163-1181 are enriched in polar residues; it reads GTKTSSLDGEVTPQTNKNN.

It belongs to the cation transport ATPase (P-type) (TC 3.A.3) family. Type IIB subfamily. As to quaternary structure, interacts with PDZD11. Interacts with SLC35G1 and STIM1. Interacts with calmodulin. Isoform 1 is detected in brain, heart, liver, testis and epididymis. Isoform 2 is detected in brain (at protein level), heart, seminal vesicle and epididymis. There is a shift in expression from isoform 1 to isoform 2 along the length of the epididymis from caput to cauda (at protein level).

It localises to the cell membrane. Its subcellular location is the cell projection. It is found in the cilium. The protein resides in the flagellum membrane. It carries out the reaction Ca(2+)(in) + ATP + H2O = Ca(2+)(out) + ADP + phosphate + H(+). Its activity is regulated as follows. Activated by calcium/calmodulin. Calcium/calmodulin-regulated and magnesium-dependent enzyme that catalyzes the hydrolysis of ATP coupled with the transport of calcium out of the cell. By regulating sperm cells calcium homeostasis, may play a role in sperm motility. This Bos taurus (Bovine) protein is Plasma membrane calcium-transporting ATPase 4.